Reading from the N-terminus, the 296-residue chain is POM121-like protein 12 (296 aa).

Disordered stretches follow at residues 1-54 (MGAA…SPWP) and 142-162 (APPE…RPAG). Positions 34-52 (SRSPSTPQTTPSPQGRQSP) are enriched in low complexity.

Belongs to the POM121 family.

This chain is POM121-like protein 12 (POM121L12), found in Homo sapiens (Human).